Reading from the N-terminus, the 104-residue chain is Astakine (104 aa).

Positions 1-22 are cleaved as a signal peptide; the sequence is MKMRGVSVGVLVVAMMSGLAMA. 5 disulfides stabilise this stretch: Cys-25–Cys-38, Cys-32–Cys-50, Cys-37–Cys-76, Cys-60–Cys-84, and Cys-78–Cys-91.

Belongs to the AVIT (prokineticin) family.

Its subcellular location is the secreted. Its function is as follows. Cytokine directly involved in hematopoiesis. The chain is Astakine from Pacifastacus leniusculus (Signal crayfish).